The sequence spans 491 residues: Delayed-rectifier potassium channel regulatory subunit KCNS3 (491 aa).

The Cytoplasmic segment spans residues 1–182 (MVFGEFFHRP…IRMENPAYCL (182 aa)). A helical transmembrane segment spans residues 183 to 204 (SAKLIAISSLSVVLASIVAMCV). Over 205 to 220 (HSMSEFQNEDGEVDDP) the chain is Extracellular. A helical transmembrane segment spans residues 221 to 243 (VLEGVEIACIAWFTGELAVRLVA). Topologically, residues 244 to 254 (APCQKKFWKNP) are cytoplasmic. A helical membrane pass occupies residues 255–275 (LNIIDFVSIIPFYATLAVDTK). The Extracellular segment spans residues 276–285 (EEESEDIENM). A helical; Voltage-sensor transmembrane segment spans residues 286–306 (GKVVQILRLMRIFRILKLARH). Residues 307 to 321 (SVGLRSLGATLRHSY) lie on the Cytoplasmic side of the membrane. Residues 322-343 (HEVGLLLLFLSVGISIFSVLIY) form a helical membrane-spanning segment. At 344-357 (SVEKDDHTSSLTSI) the chain is on the extracellular side. The helical intramembrane region spans 358-369 (PICWWWATISMT). A Selectivity filter motif is present at residues 370-375 (TVGYGD). The stretch at 370–377 (TVGYGDTH) is an intramembrane region. Residues 378 to 384 (PVTLAGK) are Extracellular-facing. A helical membrane pass occupies residues 385–413 (LIASTCIICGILVVALPITIIFNKFSKYY). Residues 414 to 491 (QKQKDIDVDQ…TASLENCTAK (78 aa)) are Cytoplasmic-facing.

The protein belongs to the potassium channel family. S (TC 1.A.1.2) subfamily. Kv9.3/KCNS3 sub-subfamily. Heterotetramer with KCNB1. Does not form homomultimers.

It localises to the cell membrane. Potassium channel regulatory subunit that modulates the delayed rectifier potassium channel activity of KCNB1 by namely slowing down the deactivation and inactivation time constants. While it does not form functional channel on its own, it can form functional heterotetrameric channels with KCNB1. In Oryctolagus cuniculus (Rabbit), this protein is Delayed-rectifier potassium channel regulatory subunit KCNS3.